The following is a 667-amino-acid chain: MASVRAAVGASLAVARTRPRCVGLALPSSAPRSAWAAAMEPTPRWLAGLRFDNRALRELPVETPPPGPEDSLATPRPVPGACFSRARPAPLRRPRLVALSEPALALLGLEASEEAEVEAEAALFFSGNALLPGTEPAAHCYCGHQFGQFAGQLGDGAAMYLGEVCTAAGERWELQLKGAGPTPFSRQADGRKVLRSSIREFLCSEAMFHLGIPTTRAGACVTSESTVMRDVFYDGNPKYEKCTVVLRIAPTFIRFGSFEIFKPPDEHTGRAGPSVGRDDIRVQLLDYVISSFYPEIQAAHTCDTDNIQRNAAFFREVTQRTARMVAEWQCVGFCHGVLNTDNMSIVGLTIDYGPFGFLDRYDPDHICNASDNAGRYTYSKQPQVCKWNLQKLAEALEPELPLALAEAILKEEFDTEFQRHYLQKMRKKLGLIRVEKEEDGTLVAKLLETMHLTGADFTNTFCVLSSFPADLSDSAEFLSRLTSQCASLEELRLAFRPQMDPRQLSMMLMLAQSNPQLFALIGTQANVTKELERVEHQSRLEQLSPSDLQRKNRDHWEAWLQEYRDRLDKEKEGVGDTAAWQAERVRVMRANNPKYVLRNYIAQKAIEAAENGDFSEVRRVLKLLESPYHSEEEATGPEAVARSTEEQSSYSNRPPLWAAELCVTUSS.

A mitochondrion-targeting transit peptide spans 1–6; that stretch reads MASVRA. ATP contacts are provided by G154, G156, K177, D189, G190, R247, and R254. The active-site Proton acceptor is the D341. The Mg(2+) site is built by N342 and D351. Residue D351 coordinates ATP. The disordered stretch occupies residues 628–652; sequence YHSEEEATGPEAVARSTEEQSSYSN. T635 bears the Phosphothreonine mark. At S651 the chain carries Phosphoserine. U665 is a non-standard amino acid (selenocysteine).

The protein belongs to the SELO family. Requires Mg(2+) as cofactor.

The protein resides in the mitochondrion. The enzyme catalyses L-tyrosyl-[protein] + ATP = O-(5'-adenylyl)-L-tyrosyl-[protein] + diphosphate. It carries out the reaction L-threonyl-[protein] + ATP = 3-O-(5'-adenylyl)-L-threonyl-[protein] + diphosphate. It catalyses the reaction L-seryl-[protein] + ATP = 3-O-(5'-adenylyl)-L-seryl-[protein] + diphosphate. Catalyzes the transfer of adenosine 5'-monophosphate (AMP) to Ser, Thr and Tyr residues of target proteins (AMPylation). May be a redox-active mitochondrial selenoprotein which interacts with a redox target protein. The polypeptide is Protein adenylyltransferase SelO, mitochondrial (Mus musculus (Mouse)).